The primary structure comprises 351 residues: UDP-N-acetylglucosamine--N-acetylmuramyl-(pentapeptide) pyrophosphoryl-undecaprenol N-acetylglucosamine transferase (351 aa).

UDP-N-acetyl-alpha-D-glucosamine contacts are provided by residues 13 to 15 (TGG), asparagine 125, arginine 161, serine 189, isoleucine 241, 260 to 265 (ALTVCE), and glutamine 285.

The protein belongs to the glycosyltransferase 28 family. MurG subfamily.

The protein localises to the cell inner membrane. The catalysed reaction is di-trans,octa-cis-undecaprenyl diphospho-N-acetyl-alpha-D-muramoyl-L-alanyl-D-glutamyl-meso-2,6-diaminopimeloyl-D-alanyl-D-alanine + UDP-N-acetyl-alpha-D-glucosamine = di-trans,octa-cis-undecaprenyl diphospho-[N-acetyl-alpha-D-glucosaminyl-(1-&gt;4)]-N-acetyl-alpha-D-muramoyl-L-alanyl-D-glutamyl-meso-2,6-diaminopimeloyl-D-alanyl-D-alanine + UDP + H(+). The protein operates within cell wall biogenesis; peptidoglycan biosynthesis. Functionally, cell wall formation. Catalyzes the transfer of a GlcNAc subunit on undecaprenyl-pyrophosphoryl-MurNAc-pentapeptide (lipid intermediate I) to form undecaprenyl-pyrophosphoryl-MurNAc-(pentapeptide)GlcNAc (lipid intermediate II). The polypeptide is UDP-N-acetylglucosamine--N-acetylmuramyl-(pentapeptide) pyrophosphoryl-undecaprenol N-acetylglucosamine transferase (Haemophilus influenzae (strain PittGG)).